The chain runs to 479 residues: NADH-quinone oxidoreductase subunit N 2 (479 aa).

Helical transmembrane passes span 9–29, 40–60, 75–95, 110–130, 131–151, 164–184, 206–226, 238–258, 272–292, 299–319, 326–346, 371–391, 404–424, and 449–469; these read WALA…LLIV, LLLW…LMLA, RFAV…FFLS, YVLL…IDLL, SIYV…GFLR, VILG…IYGL, LLLA…AVPF, PTTI…AVIL, WIIV…VALV, LLAY…VAGG, VMLY…AVIM, ALLM…AGFF, GFVA…YFYI, and ATLA…AWFL.

This sequence belongs to the complex I subunit 2 family. As to quaternary structure, NDH-1 is composed of 14 different subunits. Subunits NuoA, H, J, K, L, M, N constitute the membrane sector of the complex.

It is found in the cell inner membrane. The enzyme catalyses a quinone + NADH + 5 H(+)(in) = a quinol + NAD(+) + 4 H(+)(out). Its function is as follows. NDH-1 shuttles electrons from NADH, via FMN and iron-sulfur (Fe-S) centers, to quinones in the respiratory chain. The immediate electron acceptor for the enzyme in this species is believed to be ubiquinone. Couples the redox reaction to proton translocation (for every two electrons transferred, four hydrogen ions are translocated across the cytoplasmic membrane), and thus conserves the redox energy in a proton gradient. The polypeptide is NADH-quinone oxidoreductase subunit N 2 (Rhizobium meliloti (strain 1021) (Ensifer meliloti)).